A 469-amino-acid polypeptide reads, in one-letter code: Cytosolic beta-glucosidase (469 aa).

Residues Gln17, His120, and Asn164 each coordinate substrate. Glu165 serves as the catalytic Proton donor. Residue Tyr309 participates in substrate binding. The Nucleophile role is filled by Glu373. Residues Trp417 and 424–425 (EW) contribute to the substrate site.

This sequence belongs to the glycosyl hydrolase 1 family. Klotho subfamily. Post-translationally, the N-terminus is blocked. In terms of tissue distribution, present in hepatocytes (at protein level).

The protein resides in the cytoplasm. Its subcellular location is the cytosol. It carries out the reaction Hydrolysis of terminal, non-reducing beta-D-glucosyl residues with release of beta-D-glucose.. The enzyme catalyses a beta-D-glucosyl-(1&lt;-&gt;1')-N-acylsphing-4-enine + H2O = an N-acylsphing-4-enine + D-glucose. The catalysed reaction is a beta-D-galactosyl-(1&lt;-&gt;1')-N-acylsphing-4-enine + H2O = an N-acylsphing-4-enine + D-galactose. It catalyses the reaction beta-D-glucosyl-(1&lt;-&gt;1)-sphing-4-enine + H2O = sphing-4-enine + D-glucose. It carries out the reaction beta-D-glucosyl-(1&lt;-&gt;1)-N-octadecanoylsphing-4-enine + H2O = N-octadecanoylsphing-4-enine + D-glucose. The enzyme catalyses beta-D-galactosyl-(1&lt;-&gt;1)-sphing-4-enine + H2O = sphing-4-enine + D-galactose. The catalysed reaction is beta-D-galactosyl-(1&lt;-&gt;1')-N-octadecanoylsphing-4-enine + H2O = N-octadecanoylsphing-4-enine + D-galactose. It catalyses the reaction a beta-D-xylosyl-(1&lt;-&gt;1')-N-acylsphing-4-enine + cholesterol = cholesteryl 3-beta-D-xyloside + an N-acylsphing-4-enine. Inhibited by 2,4-dinitrophenyl-2-fluoro-2-deoxy-beta-D-glucopyranoside. In terms of biological role, neutral cytosolic beta-glycosidase with a broad substrate specificity that could play a role in the catabolism of glycosylceramides. Has a significant glucosylceramidase activity in vitro. However, that activity is relatively low and its significance in vivo is not clear. Hydrolyzes galactosylceramide/GalCer, glucosylsphingosine/GlcSph and galactosylsphingosine/GalSph. However, the in vivo relevance of these activities is unclear. It can also hydrolyze a broad variety of dietary glycosides including phytoestrogens, flavonols, flavones, flavanones and cyanogens in vitro and could therefore play a role in the metabolism of xenobiotics. Possesses transxylosylase activity in vitro using xylosylated ceramides/XylCers (such as beta-D-xylosyl-(1&lt;-&gt;1')-N-acylsphing-4-enine) as xylosyl donors and cholesterol as acceptor. Could also play a role in the catabolism of cytosolic sialyl free N-glycans. This chain is Cytosolic beta-glucosidase, found in Cavia porcellus (Guinea pig).